The primary structure comprises 95 residues: Co-chaperonin GroES (95 aa).

The protein belongs to the GroES chaperonin family. In terms of assembly, heptamer of 7 subunits arranged in a ring. Interacts with the chaperonin GroEL.

It is found in the cytoplasm. Its function is as follows. Together with the chaperonin GroEL, plays an essential role in assisting protein folding. The GroEL-GroES system forms a nano-cage that allows encapsulation of the non-native substrate proteins and provides a physical environment optimized to promote and accelerate protein folding. GroES binds to the apical surface of the GroEL ring, thereby capping the opening of the GroEL channel. The polypeptide is Co-chaperonin GroES (Methylocella silvestris (strain DSM 15510 / CIP 108128 / LMG 27833 / NCIMB 13906 / BL2)).